The primary structure comprises 139 residues: Toxin FitB (139 aa).

One can recognise a PINc domain in the interval 2–123; the sequence is ILLDTNVISE…HSLTVATRDT (122 aa). Mg(2+) contacts are provided by Asp-5 and Asp-104.

Belongs to the PINc/VapC protein family. Forms a heterodimer with FitA, 4 FitAB heterodimers form a complex that binds to promoter DNA. The complex is also seen in solution. This protein does not actually contact DNA. Mg(2+) is required as a cofactor.

Toxic component of a type II toxin-antitoxin (TA) system. Plays a role in the speed with which bacteria traverse human epithelial cells; disruption of the locus increases the speed of trafficking about 2-4-fold. FitAB binds to its own promoter better than FitA alone. The expected nuclease activity was not observed for the FitAB complex, perhaps because FitA (the antitoxin) prevents metal binding and thus catalysis by FitB. This is Toxin FitB (fitB) from Neisseria gonorrhoeae (strain ATCC 700825 / FA 1090).